Reading from the N-terminus, the 536-residue chain is Probable 1,4-beta-D-glucan cellobiohydrolase B (536 aa).

An N-terminal signal peptide occupies residues 1 to 21 (MSSFQVYRAALLLSILATANA). The tract at residues 22–458 (QQVGTYTTET…SNIKFGPIGS (437 aa)) is catalytic. The Nucleophile role is filled by glutamate 233. Glutamate 238 acts as the Proton donor in catalysis. Asparagine 351 and asparagine 414 each carry an N-linked (GlcNAc...) asparagine glycan. The ser/Thr-rich linker stretch occupies residues 459–500 (TYSSGSSSGSGSSSSSSSTTTKATSTTLKTTSTTSSGSSSTS). The interval 464–499 (SSSGSGSSSSSSSTTTKATSTTLKTTSTTSSGSSST) is disordered. Positions 500–536 (SAAQAYGQCGGQGWTGPTTCVSGYTCTYENAYYSQCL) constitute a CBM1 domain. Cystine bridges form between cysteine 508–cysteine 525 and cysteine 519–cysteine 535.

This sequence belongs to the glycosyl hydrolase 7 (cellulase C) family.

Its subcellular location is the secreted. The enzyme catalyses Hydrolysis of (1-&gt;4)-beta-D-glucosidic linkages in cellulose and cellotetraose, releasing cellobiose from the non-reducing ends of the chains.. In terms of biological role, the biological conversion of cellulose to glucose generally requires three types of hydrolytic enzymes: (1) Endoglucanases which cut internal beta-1,4-glucosidic bonds; (2) Exocellobiohydrolases that cut the disaccharide cellobiose from the non-reducing end of the cellulose polymer chain; (3) Beta-1,4-glucosidases which hydrolyze the cellobiose and other short cello-oligosaccharides to glucose. This is Probable 1,4-beta-D-glucan cellobiohydrolase B (cbhB) from Aspergillus niger (strain ATCC MYA-4892 / CBS 513.88 / FGSC A1513).